A 402-amino-acid chain; its full sequence is NAD-dependent protein deacetylase sirtuin-7 (402 aa).

2 disordered regions span residues 1–25 and 59–78; these read MAAG…REEQ and VTEL…RQEE. Residues 9–25 show a composition bias toward basic and acidic residues; sequence RSERKAAERVRRLREEQ. The region spanning 83-330 is the Deacetylase sirtuin-type domain; sequence PEELRRKVRE…RLLMDELGLE (248 aa). Residues 108–127 and 168–171 each bind NAD(+); these read GAGI…NGVW and QNCD. The Proton acceptor role is filled by H188. 4 residues coordinate Zn(2+): C196, C199, C226, and C229. NAD(+)-binding positions include 269-271, 298-300, and C316; these read GSS and NLQ. Positions 355-385 are disordered; it reads SHSRKSLCRSREEPPPGDQSAPLASATPILG. At R390 the chain carries Asymmetric dimethylarginine; alternate. An Omega-N-methylarginine; alternate modification is found at R390.

Belongs to the sirtuin family. Class IV subfamily. Interacts with UBTF and the RNA polymerase I complex. Interacts with components of the B-WICH complex, such as MYBBP1A, SMARCA5/SNF2H and BAZ1B/WSTF. Interacts with ELK4, leading to stabilization at target promoters for H3K18Ac deacetylation. Interacts with histone H2A and/or histone H2B. Interacts with DNMT1. Interacts with SIRT1. Zn(2+) serves as cofactor. Phosphorylated during mitosis. In terms of processing, methylation at Arg-390 by PRMT6 inhibits the H3K18Ac histone deacetylase activity, promoting mitochondria biogenesis and maintaining mitochondria respiration. Post-translationally, ubiquitinated via 'Lys-63'-linked ubiquitin chains. Deubiquitinated by USP7, inhibiting the H3K18Ac histone deacetylase activity and regulating gluconeogenesis. Ubiquitinated by E3 ubiquitin-protein ligase complex containing FBXO7; leading to proteasomal degradation.

The protein localises to the nucleus. The protein resides in the nucleolus. Its subcellular location is the nucleoplasm. It is found in the chromosome. It localises to the cytoplasm. It carries out the reaction N(6)-acetyl-L-lysyl-[protein] + NAD(+) + H2O = 2''-O-acetyl-ADP-D-ribose + nicotinamide + L-lysyl-[protein]. The catalysed reaction is N(6)-glutaryl-L-lysyl-[protein] + NAD(+) + H2O = 2''-O-glutaryl-ADP-D-ribose + nicotinamide + L-lysyl-[protein]. The enzyme catalyses N(6)-succinyl-L-lysyl-[protein] + NAD(+) + H2O = 2''-O-succinyl-ADP-D-ribose + nicotinamide + L-lysyl-[protein]. It catalyses the reaction N(6)-propanoyl-L-lysyl-[protein] + NAD(+) + H2O = 3''-O-propanoyl-ADP-D-ribose + nicotinamide + L-lysyl-[protein]. It carries out the reaction N(6)-decanoyl-L-lysyl-[protein] + NAD(+) + H2O = 2''-O-decanoyl-ADP-D-ribose + nicotinamide + L-lysyl-[protein]. NAD-dependent protein-lysine deacetylase and deacylase activities are activated by nucleic acids. Histone deacetylase activity is activated by DNA. Protein-lysine deacylase activity is activated by RNA. H3K18Ac histone deacetylase activity is inhibited by methylation at Arg-390. H3K18Ac histone deacetylase activity is inhibited by deubiquitination by USP7. Its function is as follows. NAD-dependent protein-lysine deacylase that can act both as a deacetylase or deacylase (desuccinylase, depropionylase, deglutarylase and dedecanoylase), depending on the context. Specifically mediates deacetylation of histone H3 at 'Lys-18' (H3K18Ac). In contrast to other histone deacetylases, displays strong preference for a specific histone mark, H3K18Ac, directly linked to control of gene expression. H3K18Ac is mainly present around the transcription start site of genes and has been linked to activation of nuclear hormone receptors; SIRT7 thereby acts as a transcription repressor. Moreover, H3K18 hypoacetylation has been reported as a marker of malignancy in various cancers and seems to maintain the transformed phenotype of cancer cells. Also able to mediate deacetylation of histone H3 at 'Lys-36' (H3K36Ac) in the context of nucleosomes. Also mediates deacetylation of non-histone proteins, such as ATM, CDK9, DDX21, DDB1, FBL, FKBP5/FKBP51, GABPB1, RAN, RRP9/U3-55K and POLR1E/PAF53. Enriched in nucleolus where it stimulates transcription activity of the RNA polymerase I complex. Acts by mediating the deacetylation of the RNA polymerase I subunit POLR1E/PAF53, thereby promoting the association of RNA polymerase I with the rDNA promoter region and coding region. In response to metabolic stress, SIRT7 is released from nucleoli leading to hyperacetylation of POLR1E/PAF53 and decreased RNA polymerase I transcription. Required to restore the transcription of ribosomal RNA (rRNA) at the exit from mitosis. Promotes pre-ribosomal RNA (pre-rRNA) cleavage at the 5'-terminal processing site by mediating deacetylation of RRP9/U3-55K, a core subunit of the U3 snoRNP complex. Mediates 'Lys-37' deacetylation of Ran, thereby regulating the nuclear export of NF-kappa-B subunit RELA/p65. Acts as a regulator of DNA damage repair by mediating deacetylation of ATM during the late stages of DNA damage response, promoting ATM dephosphorylation and deactivation. Suppresses the activity of the DCX (DDB1-CUL4-X-box) E3 ubiquitin-protein ligase complexes by mediating deacetylation of DDB1, which prevents the interaction between DDB1 and CUL4 (CUL4A or CUL4B). Activates RNA polymerase II transcription by mediating deacetylation of CDK9, thereby promoting 'Ser-2' phosphorylation of the C-terminal domain (CTD) of RNA polymerase II. Deacetylates FBL, promoting histone-glutamine methyltransferase activity of FBL. Acts as a regulator of mitochondrial function by catalyzing deacetylation of GABPB1. Regulates Akt/AKT1 activity by mediating deacetylation of FKBP5/FKBP51. Required to prevent R-loop-associated DNA damage and transcription-associated genomic instability by mediating deacetylation and subsequent activation of DDX21, thereby overcoming R-loop-mediated stalling of RNA polymerases. In addition to protein deacetylase activity, also acts as a protein-lysine deacylase. Acts as a protein depropionylase by mediating depropionylation of Osterix (SP7), thereby regulating bone formation by osteoblasts. Acts as a histone deglutarylase by mediating deglutarylation of histone H4 on 'Lys-91' (H4K91glu); a mark that destabilizes nucleosomes by promoting dissociation of the H2A-H2B dimers from nucleosomes. Acts as a histone desuccinylase: in response to DNA damage, recruited to DNA double-strand breaks (DSBs) and catalyzes desuccinylation of histone H3 on 'Lys-122' (H3K122succ), thereby promoting chromatin condensation and DSB repair. Also promotes DSB repair by promoting H3K18Ac deacetylation, regulating non-homologous end joining (NHEJ). Along with its role in DNA repair, required for chromosome synapsis during prophase I of female meiosis by catalyzing H3K18Ac deacetylation. Involved in transcriptional repression of LINE-1 retrotransposon via H3K18Ac deacetylation, and promotes their association with the nuclear lamina. Required to stabilize ribosomal DNA (rDNA) heterochromatin and prevent cellular senescence induced by rDNA instability. Acts as a negative regulator of SIRT1 by preventing autodeacetylation of SIRT1, restricting SIRT1 deacetylase activity. The polypeptide is NAD-dependent protein deacetylase sirtuin-7 (Rattus norvegicus (Rat)).